Reading from the N-terminus, the 455-residue chain is GTPase Der (455 aa).

2 EngA-type G domains span residues 4 to 169 (PVVA…PPKS) and 178 to 353 (IQLA…EQHR). Residues 10–17 (GRPNVGKS), 57–61 (DTGGL), 120–123 (NKCE), 184–191 (GRPNVGKS), 231–235 (DTAGI), and 296–299 (NKWD) each bind GTP. The KH-like domain maps to 354–439 (RRVSTSVVNE…PLKLFWRGKQ (86 aa)).

Belongs to the TRAFAC class TrmE-Era-EngA-EngB-Septin-like GTPase superfamily. EngA (Der) GTPase family. As to quaternary structure, associates with the 50S ribosomal subunit.

GTPase that plays an essential role in the late steps of ribosome biogenesis. The chain is GTPase Der from Synechococcus sp. (strain WH7803).